The primary structure comprises 261 residues: Auxin-responsive protein IAA10 (261 aa).

Residues 1–43 (MNGLQEVCSSSGSVMIGLPAEEDENAAHSSEDSSCPDESVSET) form a disordered region. The EAR-like (transcriptional repression) motif lies at 45–49 (LDLAL). The segment at 62 to 90 (LSSSSSSLTRESGTKRSADSSPAAASNAT) is disordered. A compositionally biased stretch (low complexity) spans 80-89 (DSSPAAASNA). The PB1 domain occupies 151-253 (SMLVKVTMDG…SVTRLRIMKT (103 aa)).

This sequence belongs to the Aux/IAA family. As to quaternary structure, homodimers and heterodimers. As to expression, preferentially expressed in vegetative organs.

Its subcellular location is the nucleus. Its function is as follows. Aux/IAA proteins are short-lived transcriptional factors that function as repressors of early auxin response genes at low auxin concentrations. Repression is thought to result from the interaction with auxin response factors (ARFs), proteins that bind to the auxin-responsive promoter element (AuxRE). Formation of heterodimers with ARF proteins may alter their ability to modulate early auxin response genes expression. The protein is Auxin-responsive protein IAA10 (IAA10) of Arabidopsis thaliana (Mouse-ear cress).